We begin with the raw amino-acid sequence, 298 residues long: Ribose-phosphate pyrophosphokinase (298 aa).

Residues 33–35 (DGE) and 91–92 (RQ) each bind ATP. His-125 and Asp-164 together coordinate Mg(2+). Lys-187 is a catalytic residue. D-ribose 5-phosphate-binding residues include Arg-189 and Asp-224.

It belongs to the ribose-phosphate pyrophosphokinase family. Class III (archaeal) subfamily. Requires Mg(2+) as cofactor.

It is found in the cytoplasm. The catalysed reaction is D-ribose 5-phosphate + ATP = 5-phospho-alpha-D-ribose 1-diphosphate + AMP + H(+). Its pathway is metabolic intermediate biosynthesis; 5-phospho-alpha-D-ribose 1-diphosphate biosynthesis; 5-phospho-alpha-D-ribose 1-diphosphate from D-ribose 5-phosphate (route I): step 1/1. Its function is as follows. Involved in the biosynthesis of the central metabolite phospho-alpha-D-ribosyl-1-pyrophosphate (PRPP) via the transfer of pyrophosphoryl group from ATP to 1-hydroxyl of ribose-5-phosphate (Rib-5-P). The sequence is that of Ribose-phosphate pyrophosphokinase from Methanobrevibacter smithii (strain ATCC 35061 / DSM 861 / OCM 144 / PS).